The sequence spans 95 residues: UPF0213 protein ESA_03545 (95 aa).

Positions 2-77 (EEWFLYLIRC…KQLTKRQKEQ (76 aa)) constitute a GIY-YIG domain.

Belongs to the UPF0213 family.

This chain is UPF0213 protein ESA_03545, found in Cronobacter sakazakii (strain ATCC BAA-894) (Enterobacter sakazakii).